Here is a 401-residue protein sequence, read N- to C-terminus: Nodal homolog 3-A (401 aa).

The signal sequence occupies residues 1-18 (MAFLSLFLCLVFSSPLMA). A propeptide spanning residues 19-274 (MPPALQGRKA…KVNGFRRLRR (256 aa)) is cleaved from the precursor. N168, N337, and N344 each carry an N-linked (GlcNAc...) asparagine glycan. 2 disulfide bridges follow: C299/C365 and C328/C396.

It belongs to the TGF-beta family. In terms of assembly, monomer. The propeptide region interacts with bmp4 in a non-covalent manner. Expressed in the dorsal marginal region of late blastula, becoming restricted to the Spemann organizer at the early gastrula stage.

The protein localises to the secreted. In terms of biological role, exhibits mesoderm-dorsalizing activity and neural-inducing activity, but lacks mesoderm-inducing activity. Regulates the expression of specific mesodermal and neural genes. Induces convergent extension movements at the embryonic midline by activating the fgf signaling pathway to induce t/bra expression in the organizer region. Acts with wnt11 to induce Spemann organizer cells and induce axis formation. The unprocessed protein antagonizes bmp-signaling. This chain is Nodal homolog 3-A, found in Xenopus tropicalis (Western clawed frog).